Consider the following 715-residue polypeptide: Tensin-4 (715 aa).

Residues 1–18 form the signal peptide; the sequence is MSQVMSSPLLAGGHAVSL. The residue at position 82 (serine 82) is a Phosphoserine. Disordered stretches follow at residues 159–183, 195–251, 291–364, and 376–435; these read RCHD…RSGG, RSSS…SPLV, SLLH…CPPS, and LING…ARDM. Residues 197–206 are compositionally biased toward polar residues; it reads SSESLIFSGN. Serine 248 carries the post-translational modification Phosphoserine. Residues 291–325 show a composition bias toward low complexity; that stretch reads SLLHSSNSSHQSSSRSLESPANSSSSLHSLGSVSL. The SH2 domain maps to 449 to 556; it reads WFKPNITREQ…ALPCKLTIPQ (108 aa). Positions 582–705 constitute a PTB domain; the sequence is CHTLYLSSVS…QPASQVIGLV (124 aa).

The protein belongs to the PTEN phosphatase protein family. As to quaternary structure, interacts (via SH2 domain) with Rho GTPase-activating protein DLC1 (via C-terminus); the interaction is independent of DLC1 tyrosine phosphorylation. Interacts with integrin ITGB1; the interaction displaces tensin TNS3 from the ITGB1 cytoplasmic tail and promotes ITGB1 stability. Interacts (via SH2 domain) with E3 ubiquitin-protein ligase CBL (phosphorylated on 'Tyr-774'); the interaction is enhanced in the presence of EGF and reduces interaction of CBL with EGFR. Interacts (via SH2 domain) with receptor tyrosine kinase MET (when phosphorylated); the interaction increases MET protein stability. Post-translationally, proteolytically cleaved by caspase-3 during apoptosis. In terms of tissue distribution, expressed at low levels in colon (at protein level). Expressed in prostate and placenta.

The protein resides in the cell junction. It is found in the focal adhesion. Its subcellular location is the cytoplasm. It localises to the cytoskeleton. In terms of biological role, promotes EGF-induced cell migration by displacing tensin TNS3 from the cytoplasmic tail of integrin ITGB1 which results in dissociation of TNS3 from focal adhesions, disassembly of actin stress fibers and initiation of cell migration. Suppresses ligand-induced degradation of EGFR by reducing EGFR ubiquitination in the presence of EGF. Increases MET protein stability by inhibiting MET endocytosis and subsequent lysosomal degradation which leads to increased cell survival, proliferation and migration. This is Tensin-4 (TNS4) from Homo sapiens (Human).